Reading from the N-terminus, the 488-residue chain is Ammonium transporter 1 member 1 (488 aa).

The next 11 membrane-spanning stretches (helical) occupy residues 47–69, 90–109, 129–148, 153–175, 195–217, 238–257, 281–303, 316–333, 337–356, 368–387, and 418–440; these read TYLL…LLAG, LFYY…NGFI, FLYQ…GSIA, FVAY…SHWF, VIDF…YGAL, HSAS…WYGF, AVGR…TLFG, VCNG…GCSV, WAAI…FNML, AAQL…GLFA, and HIIQ…FYIL.

This sequence belongs to the ammonia transporter channel (TC 1.A.11.2) family. In terms of tissue distribution, root hairs and leaves.

Its subcellular location is the membrane. Ammonium transporter that may be involved in ammonium uptake from the soil. The chain is Ammonium transporter 1 member 1 (AMT1-1) from Solanum lycopersicum (Tomato).